The primary structure comprises 259 residues: MAPKSKKVAPSPFAQPKAAKTTKNPLFVSRPRSFGIGQDIQPKRDLSRFVKWPEYIRLQRRRKILNLRLKVPPAIAQFQKTLDKNTATQVFKLLNKYRPETAAEKKQRLVAEAEAVANGKSAQDVSKKPYNVKYGLNHVVALIEAKKAKLVLIASDVDPIELVVFLPALCKKMGVPYAIVKNKARLGTVIHQKTAAVLAVTEVREEDKNELASIVSAVDANFSAKYDESRRKWGGGIMGGKTQALLAKRAKAAAATVRL.

The tract at residues 1–24 (MAPKSKKVAPSPFAQPKAAKTTKN) is disordered. Residues S11 and S33 each carry the phosphoserine modification.

This sequence belongs to the eukaryotic ribosomal protein eL8 family. Component of the large ribosomal subunit (LSU). Mature yeast ribosomes consist of a small (40S) and a large (60S) subunit. The 40S small subunit contains 1 molecule of ribosomal RNA (18S rRNA) and at least 33 different proteins. The large 60S subunit contains 3 rRNA molecules (25S, 5.8S and 5S rRNA) and at least 46 different proteins.

It localises to the cytoplasm. Its function is as follows. Component of the ribosome, a large ribonucleoprotein complex responsible for the synthesis of proteins in the cell. The small ribosomal subunit (SSU) binds messenger RNAs (mRNAs) and translates the encoded message by selecting cognate aminoacyl-transfer RNA (tRNA) molecules. The large subunit (LSU) contains the ribosomal catalytic site termed the peptidyl transferase center (PTC), which catalyzes the formation of peptide bonds, thereby polymerizing the amino acids delivered by tRNAs into a polypeptide chain. The nascent polypeptides leave the ribosome through a tunnel in the LSU and interact with protein factors that function in enzymatic processing, targeting, and the membrane insertion of nascent chains at the exit of the ribosomal tunnel. The sequence is that of Large ribosomal subunit protein eL8 (rpl8) from Schizosaccharomyces pombe (strain 972 / ATCC 24843) (Fission yeast).